We begin with the raw amino-acid sequence, 285 residues long: Undecaprenyl-diphosphatase (285 aa).

The next 7 membrane-spanning stretches (helical) occupy residues 3–23 (ILLLVKAAIMGIVEGLTEFLP), 41–61 (GEIVKVFDIAIQTGAMFAVIW), 87–107 (LLIAFVPAVISGLALGGLIKE), 109–129 (LFHPVPVATAFVVGGLIILWV), 197–217 (TEFSFFLGIPTLMGAGAYSLI), 226–246 (GDLPVFAVGVVFAFLSALVCI), and 260–280 (VFAWYRIAFGGLVLLSAWGGW).

The protein belongs to the UppP family.

The protein localises to the cell inner membrane. The enzyme catalyses di-trans,octa-cis-undecaprenyl diphosphate + H2O = di-trans,octa-cis-undecaprenyl phosphate + phosphate + H(+). Catalyzes the dephosphorylation of undecaprenyl diphosphate (UPP). Confers resistance to bacitracin. This is Undecaprenyl-diphosphatase from Methylibium petroleiphilum (strain ATCC BAA-1232 / LMG 22953 / PM1).